The chain runs to 360 residues: Dehydrogenase mokE (360 aa).

50-53 (SDTK) is a binding site for NADP(+). 134–141 (AGISTAGL) is a binding site for substrate. NADP(+) is bound by residues 173–176 (STAT), 196–199 (SPHN), Tyr-214, 261–262 (LN), and Thr-279. 281–285 (GPTIF) serves as a coordination point for substrate. 350-351 (LS) contacts NADP(+).

Belongs to the zinc-containing alcohol dehydrogenase family. Monomer.

It participates in polyketide biosynthesis; lovastatin biosynthesis. Its function is as follows. Dehydrogenase; part of the gene cluster that mediates the biosynthesis of monakolin K, also known as lovastatin, and which acts as a potent competitive inhibitor of HMG-CoA reductase. Monakolin K biosynthesis is performed in two stages. The first stage is catalyzed by the nonaketide synthase mokA, which belongs to type I polyketide synthases and catalyzes the iterative nine-step formation of the polyketide. This PKS stage is completed by the action of dehydrogenase mokE, which catalyzes the NADPH-dependent reduction of the unsaturated tetra-, penta- and heptaketide intermediates that arise during the mokA-mediated biosynthesis of the nonaketide chain and leads to dihydromonacolin L. Covalently bound dihydromonacolin L is released from mokA by the mokD esterase. Conversion of dihydromonacolin L into monacolin L and then monacolin J is subsequently performed with the participation of molecular oxygen and P450 monoogygenase mokC. Finally, mokF performs the conversion of monacoline J to monacoline K through the addition of the side-chain diketide moiety (2R)-2-methylbutanoate produced by the diketide synthase mokB. The sequence is that of Dehydrogenase mokE from Monascus pilosus (Red mold).